The following is a 305-amino-acid chain: Probable pyridoxal 5'-phosphate synthase subunit pdx1 (305 aa).

D-ribose 5-phosphate is bound at residue aspartate 33. Catalysis depends on lysine 90, which acts as the Schiff-base intermediate with D-ribose 5-phosphate. A D-ribose 5-phosphate-binding site is contributed by glycine 162. Arginine 174 lines the D-glyceraldehyde 3-phosphate pocket. Residues glycine 223 and 244–245 (GS) each bind D-ribose 5-phosphate.

Belongs to the PdxS/SNZ family. As to quaternary structure, homohexamer.

The catalysed reaction is aldehydo-D-ribose 5-phosphate + D-glyceraldehyde 3-phosphate + L-glutamine = pyridoxal 5'-phosphate + L-glutamate + phosphate + 3 H2O + H(+). It participates in cofactor biosynthesis; pyridoxal 5'-phosphate biosynthesis. In terms of biological role, catalyzes the formation of pyridoxal 5'-phosphate from ribose 5-phosphate (RBP), glyceraldehyde 3-phosphate (G3P) and ammonia. The ammonia is provided by pdx2. Can also use ribulose 5-phosphate and dihydroxyacetone phosphate as substrates, resulting from enzyme-catalyzed isomerization of RBP and G3P, respectively. In Dictyostelium discoideum (Social amoeba), this protein is Probable pyridoxal 5'-phosphate synthase subunit pdx1 (pdx1).